We begin with the raw amino-acid sequence, 174 residues long: MSKKQQAPVAQKPVGKQQQVNRKPQDRPGLTEDEIEEIKEAFNLFDTEGTGRVDPRELKAAMQSLGFDQKNPTIFNMIAELENEGTDIDFDQFLDAITSKLGNRESRDGINKIFDLFDDDGSNSINLNNLKRVSKELGETMTAEELAEMLERAASNGRDISREDFYNIMVKRTF.

A disordered region spans residues 1 to 33; it reads MSKKQQAPVAQKPVGKQQQVNRKPQDRPGLTED. 4 EF-hand domains span residues 33–68, 88–103, 105–140, and 141–174; these read DEIE…LGFD, IDFD…KLGN, ESRD…LGET, and MTAE…KRTF.

Belongs to the centrin family. As to quaternary structure, monomer.

It is found in the cytoplasm. The protein localises to the cytoskeleton. In terms of biological role, plays a fundamental role in microtubule organizing center structure and function. Component of the infraciliary lattice (ICL) and the ciliary basal bodies. This is Caltractin ICL1e (Icl1e) from Paramecium tetraurelia.